A 623-amino-acid chain; its full sequence is Leucine-rich repeat, immunoglobulin-like domain and transmembrane domain-containing protein 1 (623 aa).

The signal sequence occupies residues 1–21; sequence MRVALGMLWLLALAWPPQARG. Positions 22–59 constitute an LRRNT domain; sequence FCPSQCSCSLHIMGDGSKARTVVCNDPDMTLPPASIPP. Over 22–526 the chain is Lumenal; it reads FCPSQCSCSL…EVVDAENTQQ (505 aa). 5 LRR repeats span residues 60 to 81, 84 to 105, 108 to 129, 132 to 153, and 156 to 177; these read DTSRLRLERTAIRRVPGEAFRP, RLEQLWLPYNALSELNALMLRG, RLRELRLPGNRLAAFPWAALRD, KLRLLDLQANRLSAVPAEAARF, and NLTFLDLSSNQLMRLPQELIVS. Residue asparagine 156 is glycosylated (N-linked (GlcNAc...) asparagine). One can recognise an LRRCT domain in the interval 201-253; sequence NPWACDCRLYDLVHLLDGWAPNLAFIETELRCASPRSLAGVAFSQLELRKCQG. Positions 266–335 constitute an Ig-like C2-type domain; that stretch reads LLGGTALLRC…YICQAKNFLG (70 aa). A disulfide bridge connects residues cysteine 275 and cysteine 328. N-linked (GlcNAc...) asparagine glycosylation is found at asparagine 296 and asparagine 455. Positions 430-518 constitute a Fibronectin type-III domain; that stretch reads MVRSVKVVGD…QCVIFSTNEV (89 aa). Residues 527–547 traverse the membrane as a helical segment; sequence LINVVVISVAIVIALPLTLLV. Topologically, residues 548–623 are cytoplasmic; it reads CCSALQKRCR…GGRRINEYFC (76 aa). One copy of the LRR 6 repeat lies at 571–594; that stretch reads YVNLERLGYSEDGLEELSRHSVSE.

May form a homodimer. Interacts with LRIT2; may form a heterodimer with LRIT2. Interacts (via its N-terminal extracellular domain) with metabotropic glutamate receptor GRM6. Interacts (via its extreme C-terminus) with the scaffold protein FRMPD2 (via the third PDZ domain); the interaction leads to their colocalization in photoreceptor synapses.

The protein localises to the endoplasmic reticulum membrane. It localises to the cell projection. Its subcellular location is the dendrite. In terms of biological role, photoreceptor synaptic protein essential for normal vision. Involved in synapse formation in cone photoreceptor cells. This is Leucine-rich repeat, immunoglobulin-like domain and transmembrane domain-containing protein 1 (LRIT1) from Homo sapiens (Human).